The chain runs to 357 residues: Alanine racemase, catabolic (357 aa).

Catalysis depends on Lys-33, which acts as the Proton acceptor; specific for D-alanine. Residue Lys-33 is modified to N6-(pyridoxal phosphate)lysine. Arg-129 contacts substrate. The active-site Proton acceptor; specific for L-alanine is the Tyr-253. Met-301 provides a ligand contact to substrate.

Belongs to the alanine racemase family. Requires pyridoxal 5'-phosphate as cofactor.

It carries out the reaction L-alanine = D-alanine. It participates in amino-acid biosynthesis; D-alanine biosynthesis; D-alanine from L-alanine: step 1/1. Its function is as follows. Isomerizes L-alanine to D-alanine which is then likely oxidized to pyruvate by DadA. Shows racemase activity with both alanine stereoisomers, negligible activity with D-cysteine and L-serine, and exhibits no activity with the remaining natural chiral amino acids. The polypeptide is Alanine racemase, catabolic (Pseudomonas putida (strain ATCC 47054 / DSM 6125 / CFBP 8728 / NCIMB 11950 / KT2440)).